The following is a 149-amino-acid chain: Calmodulin-2 (149 aa).

Ala-2 carries the N-acetylalanine modification. EF-hand domains follow at residues Glu-8–Asn-43, Pro-44–Asp-79, Asp-81–Lys-116, and Leu-117–Lys-149. Ca(2+) is bound by residues Asp-21, Asp-23, Asp-25, Cys-27, Glu-32, Asp-57, Asp-59, Asn-61, Thr-63, Glu-68, Asp-94, Asp-96, Asn-98, Tyr-100, and Asp-105. Lys-116 is subject to N6,N6,N6-trimethyllysine. Ca(2+) is bound by residues Asp-130, Asp-132, Asp-134, Gln-136, and Glu-141.

It belongs to the calmodulin family.

Its function is as follows. Calmodulin mediates the control of a large number of enzymes, ion channels and other proteins by Ca(2+). Among the enzymes to be stimulated by the calmodulin-Ca(2+) complex are a number of protein kinases and phosphatases. The protein is Calmodulin-2 (CAM72) of Petunia hybrida (Petunia).